The chain runs to 647 residues: Acetyl-coenzyme A synthetase (647 aa).

Residues 189–192, T307, and N331 contribute to the CoA site; that span reads RGGK. ATP-binding positions include 383-385, 407-412, D496, and R511; these read GEP and DTWWQT. S519 contacts CoA. R522 provides a ligand contact to ATP. The Mg(2+) site is built by H535 and V538. R580 is a CoA binding site. K605 carries the N6-acetyllysine modification.

It belongs to the ATP-dependent AMP-binding enzyme family. Requires Mg(2+) as cofactor. In terms of processing, acetylated. Deacetylation by the SIR2-homolog deacetylase activates the enzyme.

The enzyme catalyses acetate + ATP + CoA = acetyl-CoA + AMP + diphosphate. In terms of biological role, catalyzes the conversion of acetate into acetyl-CoA (AcCoA), an essential intermediate at the junction of anabolic and catabolic pathways. AcsA undergoes a two-step reaction. In the first half reaction, AcsA combines acetate with ATP to form acetyl-adenylate (AcAMP) intermediate. In the second half reaction, it can then transfer the acetyl group from AcAMP to the sulfhydryl group of CoA, forming the product AcCoA. This chain is Acetyl-coenzyme A synthetase, found in Syntrophus aciditrophicus (strain SB).